Here is a 485-residue protein sequence, read N- to C-terminus: Aspartyl/glutamyl-tRNA(Asn/Gln) amidotransferase subunit B (485 aa).

This sequence belongs to the GatB/GatE family. GatB subfamily. In terms of assembly, heterotrimer of A, B and C subunits.

It catalyses the reaction L-glutamyl-tRNA(Gln) + L-glutamine + ATP + H2O = L-glutaminyl-tRNA(Gln) + L-glutamate + ADP + phosphate + H(+). The catalysed reaction is L-aspartyl-tRNA(Asn) + L-glutamine + ATP + H2O = L-asparaginyl-tRNA(Asn) + L-glutamate + ADP + phosphate + 2 H(+). Its function is as follows. Allows the formation of correctly charged Asn-tRNA(Asn) or Gln-tRNA(Gln) through the transamidation of misacylated Asp-tRNA(Asn) or Glu-tRNA(Gln) in organisms which lack either or both of asparaginyl-tRNA or glutaminyl-tRNA synthetases. The reaction takes place in the presence of glutamine and ATP through an activated phospho-Asp-tRNA(Asn) or phospho-Glu-tRNA(Gln). In Methylacidiphilum infernorum (isolate V4) (Methylokorus infernorum (strain V4)), this protein is Aspartyl/glutamyl-tRNA(Asn/Gln) amidotransferase subunit B.